A 413-amino-acid polypeptide reads, in one-letter code: Phosphopentomutase (413 aa).

Mn(2+) is bound by residues Asp11, Asp306, His311, Asp347, His348, and His359.

Belongs to the phosphopentomutase family. Requires Mn(2+) as cofactor.

Its subcellular location is the cytoplasm. It catalyses the reaction 2-deoxy-alpha-D-ribose 1-phosphate = 2-deoxy-D-ribose 5-phosphate. It carries out the reaction alpha-D-ribose 1-phosphate = D-ribose 5-phosphate. Its pathway is carbohydrate degradation; 2-deoxy-D-ribose 1-phosphate degradation; D-glyceraldehyde 3-phosphate and acetaldehyde from 2-deoxy-alpha-D-ribose 1-phosphate: step 1/2. Functionally, isomerase that catalyzes the conversion of deoxy-ribose 1-phosphate (dRib-1-P) and ribose 1-phosphate (Rib-1-P) to deoxy-ribose 5-phosphate (dRib-5-P) and ribose 5-phosphate (Rib-5-P), respectively. This is Phosphopentomutase from Helicobacter acinonychis (strain Sheeba).